We begin with the raw amino-acid sequence, 244 residues long: RNA transcription, translation and transport factor protein (244 aa).

3 positions are modified to N6-acetyllysine: Lys-20, Lys-62, and Lys-98.

This sequence belongs to the RTRAF family. As to quaternary structure, homodimer. Interacts with FAM98A (via N- and C-terminus). Interacts with NIN; which may prevent phosphorylation of NIN. Interacts with POLR2A. Component of a tRNA-splicing ligase complex with FAM98B, DDX1 and RTCB. (Microbial infection) Interacts with influenza A virus (IAV) RNA polymerase subunits PA, PB1 and PB2, and nucleocapsid NP. Associates with IAV polymerase complexes both in the nucleus and cytosol. Associates with IAV ribonucleoproteins (vRNP) packaged in virions. Interacts with hepatitis C virus core protein p19. In terms of tissue distribution, widely expressed. Expressed at high level in heart and skeletal muscle. Expressed at intermediate level in liver, pancreas, fetal brain and fetal lung. Weakly expressed in adult brain, adult lung, placenta, fetal liver and fetal kidney. Overexpressed in many brain tumors.

It localises to the nucleus. Its subcellular location is the cytoplasm. The protein localises to the cytosol. The protein resides in the perinuclear region. It is found in the cytoskeleton. It localises to the microtubule organizing center. Its subcellular location is the centrosome. RNA-binding protein involved in modulation of mRNA transcription by Polymerase II. Component of the tRNA-splicing ligase complex and is required for tRNA ligation. May be required for RNA transport. In terms of biological role, (Microbial infection) In case of infection by influenza virus A (IVA), is involved in viral replication. The chain is RNA transcription, translation and transport factor protein from Homo sapiens (Human).